A 176-amino-acid polypeptide reads, in one-letter code: Sigma intracellular receptor 2 (176 aa).

Residues methionine 1–cysteine 9 are Cytoplasmic-facing. A helical membrane pass occupies residues valine 10 to leucine 30. The 149-residue stretch at valine 10–leucine 158 folds into the EXPERA domain. The Lumenal segment spans residues glutamine 31 to serine 68. Residues phenylalanine 69 to leucine 89 form a helical membrane-spanning segment. Positions 75 and 77 each coordinate cholesterol. Residues lysine 90–proline 99 lie on the Cytoplasmic side of the membrane. Residues alanine 100–phenylalanine 120 traverse the membrane as a helical segment. Positions methionine 108–lysine 176 are required for interaction with Hst1/HTN1. Residues glutamate 121–arginine 140 are Lumenal-facing. The helical transmembrane segment at leucine 141–methionine 161 threads the bilayer. Residues leucine 162–lysine 176 lie on the Cytoplasmic side of the membrane. The short motif at lysine 172–lysine 176 is the ER retention motif element.

It belongs to the TMEM97/sigma-2 receptor family. As to quaternary structure, homodimer. Interacts with NPC1; the interaction impairs NPC1-mediated cholesterol transport. Interacts with PGRMC1 and LDLR; the interaction increases LDL internalization. Interacts with histatin 1/HTN1; the interaction induces HTN1-stimulating wound healing. Interacts with TSPO. Forms a complex with TSPO and PGRMC1; the interaction occurs in MIA PaCa-2 cells but not in MCF7 cells. As to expression, widely expressed in normal tissues. Expressed in pancreatic, renal, breast, colon, ovarian surface epithelial (OSE) cells. Highly expressed in various proliferating cancer cells.

It is found in the rough endoplasmic reticulum membrane. The protein resides in the nucleus membrane. In terms of biological role, sigma-2 receptor which contributes to ameliorate dysfunctional cellular processes and slow degenerative progression by regulating cell functions including cholesterol biosynthesis/trafficking, membrane trafficking, autophagy, lipid membrane-bound protein trafficking, and receptor stabilization at the cell surface. Forms a ternary complex with PGRMC1 receptor and low density lipoprotein receptor/LDLR at the plasma membrane, which increases LDLR-mediated LDL cholesterol internalization. Decreases lysosomal sterol transporter NPC1 availability to the cell, probably through NPC1-binding, hence controlling lipid transport, including cholesterol and LBPA, outside of late endosome/lysosome. Binds regio- and stereoselective ligand 20(S)-hydroxycholesterol (20(S)-OHC) which enhances TMEM97-NPC1 interaction and decreases TMEM97-PGRMC1 and TMEM97-TSPO interactions, thereby linking OHC binding to cholesterol homeostasis. Also able to bind cholesterol. Binds histatin 1 (Hst 1)/HN1 salivary peptide at the ER membrane, which is critical for increasing mitochondria-ER contacts and stimulating Hst1 wound healing properties. May alter the activity of some cytochrome P450 proteins. Although shows homologies with sterol isomerases (EXPERA domain), not able to catalyze sterol isomerization. However, may act as sensors of these molecules. Acts as a quality control factor in the ER, promoting the proteolytic degradation of nonproductive and extramitochondrial precursor proteins in the ER membrane thus removing them from the ER surface. The chain is Sigma intracellular receptor 2 from Homo sapiens (Human).